The following is a 124-amino-acid chain: Large ribosomal subunit protein bL12 (124 aa).

A compositionally biased stretch (basic and acidic residues) spans 102–116 (MSKEDAEAAKTKLEE). Residues 102-124 (MSKEDAEAAKTKLEEAGASVELK) form a disordered region.

This sequence belongs to the bacterial ribosomal protein bL12 family. As to quaternary structure, homodimer. Part of the ribosomal stalk of the 50S ribosomal subunit. Forms a multimeric L10(L12)X complex, where L10 forms an elongated spine to which 2 to 4 L12 dimers bind in a sequential fashion. Binds GTP-bound translation factors.

Functionally, forms part of the ribosomal stalk which helps the ribosome interact with GTP-bound translation factors. Is thus essential for accurate translation. The chain is Large ribosomal subunit protein bL12 from Chromohalobacter salexigens (strain ATCC BAA-138 / DSM 3043 / CIP 106854 / NCIMB 13768 / 1H11).